A 1026-amino-acid polypeptide reads, in one-letter code: UPF0182 protein FRAAL6027 (1026 aa).

The next 7 helical transmembrane spans lie at 13–33 (AKVIVPVLLAVALVIAFVAIF), 60–80 (ILLFLIFGAVMAVVIGTNIVL), 108–128 (YMKLVLVAVAAVFGLAAGLSA), 167–187 (FLLGFLLTAVLLSLLVTVLTH), 208–228 (AHISVLLGLLALLKAWAYYLD), 250–270 (AVLPAKLILLFISLACAVLFI), and 283–303 (LGAGILVLSSVVIGGIYPAFI). Residues 877–888 (AAAGAGTGATTT) show a composition bias toward low complexity. Disordered stretches follow at residues 877 to 916 (AAAGAGTGATTTTGGGGQATTQGGGTGAAPPGGTSGLQDA) and 958 to 1026 (LASP…PPPG). A compositionally biased stretch (gly residues) spans 889 to 903 (TGGGGQATTQGGGTG). A compositionally biased stretch (low complexity) spans 970–1001 (PTPSRSAAPTTRGTAAGSAPPGTTPAVAAPAG). Positions 1016–1026 (PQQPRAAPPPG) are enriched in pro residues.

It belongs to the UPF0182 family.

The protein resides in the cell membrane. This chain is UPF0182 protein FRAAL6027, found in Frankia alni (strain DSM 45986 / CECT 9034 / ACN14a).